A 181-amino-acid chain; its full sequence is Nedd8-conjugating enzyme UbcE2M (181 aa).

2 interaction with Uba3 regions span residues 4 to 7 and 24 to 54; these read LFTL and ASAA…PNDL. A UBC core domain is found at 26–170; it reads AAQLRIQKDI…VKKAMRGGCV (145 aa). The active-site Glycyl thioester intermediate is cysteine 108.

The protein belongs to the ubiquitin-conjugating enzyme family. UBC12 subfamily. As to quaternary structure, interacts with Uba3. As to expression, expressed in the wing disk.

It carries out the reaction [E1 NEDD8-activating enzyme]-S-[NEDD8 protein]-yl-L-cysteine + [E2 NEDD8-conjugating enzyme]-L-cysteine = [E1 NEDD8-activating enzyme]-L-cysteine + [E2 NEDD8-conjugating enzyme]-S-[NEDD8-protein]-yl-L-cysteine.. It participates in protein modification; protein neddylation. In terms of biological role, accepts the ubiquitin-like protein Nedd8 from the Uba3-APP-BP1 E1 complex and catalyzes its covalent attachment to other proteins. Required for Cul1 and Cul3 neddylation. Negatively regulates full-length ci stability and hedgehog signaling. This is Nedd8-conjugating enzyme UbcE2M from Drosophila melanogaster (Fruit fly).